A 601-amino-acid chain; its full sequence is Casbene synthase, chloroplastic (601 aa).

Residues 1-56 (MALPSAAMQSNPEKLNLFHRLSSLPTTSLEYGNNRFPFFSSSAKSHFKKPTQACLS) constitute a chloroplast transit peptide. 5 residues coordinate Mg(2+): aspartate 355, aspartate 359, asparagine 499, serine 503, and glutamate 507. The DDXXD motif motif lies at 355-359 (DDTID).

This sequence belongs to the terpene synthase family. The cofactor is Mg(2+).

Its subcellular location is the plastid. The protein localises to the chloroplast. The catalysed reaction is (2E,6E,10E)-geranylgeranyl diphosphate = casbene + diphosphate. Its function is as follows. Catalyzes the cyclization of geranylgeranyl diphosphate to casbene, a diterpene phytoalexin with antibacterial and antifungal activity. In Ricinus communis (Castor bean), this protein is Casbene synthase, chloroplastic.